The sequence spans 283 residues: tRNA-cytidine(32) 2-sulfurtransferase (283 aa).

Residues 32 to 37 (SGGKDS) carry the PP-loop motif motif. Positions 107, 110, and 198 each coordinate [4Fe-4S] cluster.

It belongs to the TtcA family. As to quaternary structure, homodimer. Mg(2+) serves as cofactor. The cofactor is [4Fe-4S] cluster.

Its subcellular location is the cytoplasm. The enzyme catalyses cytidine(32) in tRNA + S-sulfanyl-L-cysteinyl-[cysteine desulfurase] + AH2 + ATP = 2-thiocytidine(32) in tRNA + L-cysteinyl-[cysteine desulfurase] + A + AMP + diphosphate + H(+). Its pathway is tRNA modification. Functionally, catalyzes the ATP-dependent 2-thiolation of cytidine in position 32 of tRNA, to form 2-thiocytidine (s(2)C32). The sulfur atoms are provided by the cysteine/cysteine desulfurase (IscS) system. The polypeptide is tRNA-cytidine(32) 2-sulfurtransferase (Sorangium cellulosum (strain So ce56) (Polyangium cellulosum (strain So ce56))).